The primary structure comprises 635 residues: Early transcription factor 70 kDa subunit (635 aa).

The Helicase ATP-binding domain occupies 32 to 185; the sequence is RSIIDENKSV…SNIISLMSDE (154 aa). Residue 45–52 participates in ATP binding; sequence HIMGSGKT. The DEXH box motif lies at 135-138; that stretch reads DEAH. One can recognise a Helicase C-terminal domain in the interval 326–505; it reads KFKYFINKIE…TLPFDIKKLL (180 aa).

Belongs to the helicase family. VETF subfamily. As to quaternary structure, heterodimer of a 70 kDa and a 82 kDa subunit. Part of the early transcription complex composed of ETF, RAP94, and the DNA-directed RNA polymerase.

The protein resides in the virion. In terms of biological role, acts with RNA polymerase to initiate transcription from early gene promoters. Is recruited by the RPO-associated protein of 94 kDa (RAP94) to form the early transcription complex, which also contains the core RNA polymerase. ETF heterodimer binds to early gene promoters. The polypeptide is Early transcription factor 70 kDa subunit (VETFS) (Oryctolagus cuniculus (Rabbit)).